Reading from the N-terminus, the 1008-residue chain is Probable beta-galactosidase B (1008 aa).

The signal sequence occupies residues 1 to 18 (MLLQSLFAWALAIGPCIA). 2 N-linked (GlcNAc...) asparagine glycosylation sites follow: N20 and N23. Substrate is bound at residue Y87. N108 carries N-linked (GlcNAc...) asparagine glycosylation. Residues N132, A133, E134, and N192 each contribute to the substrate site. Residue E193 is the Proton donor of the active site. N-linked (GlcNAc...) asparagine glycosylation occurs at N208. Y262 is a binding site for substrate. C268 and C321 are oxidised to a cystine. N269 is a glycosylation site (N-linked (GlcNAc...) asparagine). E305 functions as the Nucleophile in the catalytic mechanism. Y370 lines the substrate pocket. 10 N-linked (GlcNAc...) asparagine glycosylation sites follow: N453, N594, N624, N681, N703, N782, N788, N816, N826, and N879.

This sequence belongs to the glycosyl hydrolase 35 family.

Its subcellular location is the secreted. It catalyses the reaction Hydrolysis of terminal non-reducing beta-D-galactose residues in beta-D-galactosides.. Cleaves beta-linked terminal galactosyl residues from gangliosides, glycoproteins, and glycosaminoglycans. The sequence is that of Probable beta-galactosidase B (lacB) from Sclerotinia sclerotiorum (strain ATCC 18683 / 1980 / Ss-1) (White mold).